Here is a 485-residue protein sequence, read N- to C-terminus: Adenosylhomocysteinase (485 aa).

The substrate site is built by Thr-64, Asp-139, and Glu-205. Residue 206–208 participates in NAD(+) binding; it reads TTT. Residues Lys-235 and Asp-239 each coordinate substrate. Residues Asn-240, 269–274, Glu-292, Asn-327, 348–350, and Asn-397 each bind NAD(+); these read GYGDVG and IGH.

This sequence belongs to the adenosylhomocysteinase family. NAD(+) serves as cofactor.

The enzyme catalyses S-adenosyl-L-homocysteine + H2O = L-homocysteine + adenosine. It participates in amino-acid biosynthesis; L-homocysteine biosynthesis; L-homocysteine from S-adenosyl-L-homocysteine: step 1/1. Adenosylhomocysteine is a competitive inhibitor of S-adenosyl-L-methionine-dependent methyl transferase reactions; therefore adenosylhomocysteinase may play a key role in the control of methylations via regulation of the intracellular concentration of adenosylhomocysteine. The polypeptide is Adenosylhomocysteinase (SAHH) (Phalaenopsis sp. (Moth orchid)).